Consider the following 187-residue polypeptide: Protein P18, mitochondrial (187 aa).

Residues 1–17 constitute a mitochondrion transit peptide; that stretch reads MRRLSSQLMCTAAAVRF. The disordered stretch occupies residues 160–187; the sequence is NAAKAKADGKEHPSTLAQQQSLFDIKIQ.

It localises to the mitochondrion inner membrane. In terms of biological role, putative RNA-binding protein. This Leishmania tarentolae (Sauroleishmania tarentolae) protein is Protein P18, mitochondrial.